The sequence spans 416 residues: MITRVRSELTRYLRTETVGGAILLVAAAIALLWVNSPWGDSYLRMTETVLAIEPLHLELTLADWTKDGLLAVFFFVAGLELKRELVVGELADPKRAALPIIAAVGGVVTPALIAAVIGHGAPGMDKGWAIPVATDIAFALGVLALTGSRIPATARVFLLSLAVVDDLLAIILIAVLFTVGVSLLWLLAAAACMAGWWLAQRRRLRTPLVYVPLALVTWYALHEAGVHPTLAGVALGLLTRVRPDPDEEWAPAARLEHLIQPVSAGICVPLFALFAAGVPLNATVFGELFTDRLALAVMLGLLLGKTIGIFGISWVAIRFGLATRPSGLGYRDMFALSVLGAIGFTVSLLVAELALPDGDTVELAKAAVLITSLAASLAGSALLLRRGRVHQARQDALELQPDEGDASDPSEGGSLR.

Helical transmembrane passes span 18 to 38, 59 to 79, 97 to 117, 127 to 147, 167 to 187, 265 to 285, 297 to 317, 333 to 353, and 363 to 383; these read VGGA…NSPW, LTLA…VAGL, ALPI…AAVI, GWAI…ALTG, LLAI…LWLL, GICV…ATVF, VMLG…WVAI, MFAL…VAEL, and LAKA…SALL. Positions 396-416 are disordered; it reads ALELQPDEGDASDPSEGGSLR.

The protein belongs to the NhaA Na(+)/H(+) (TC 2.A.33) antiporter family.

It is found in the cell membrane. It catalyses the reaction Na(+)(in) + 2 H(+)(out) = Na(+)(out) + 2 H(+)(in). Its function is as follows. Na(+)/H(+) antiporter that extrudes sodium in exchange for external protons. The polypeptide is Na(+)/H(+) antiporter NhaA (Nocardia farcinica (strain IFM 10152)).